We begin with the raw amino-acid sequence, 262 residues long: Acyl-[acyl-carrier-protein]--UDP-N-acetylglucosamine O-acyltransferase (262 aa).

This sequence belongs to the transferase hexapeptide repeat family. LpxA subfamily. In terms of assembly, homotrimer.

The protein resides in the cytoplasm. The enzyme catalyses a (3R)-hydroxyacyl-[ACP] + UDP-N-acetyl-alpha-D-glucosamine = a UDP-3-O-[(3R)-3-hydroxyacyl]-N-acetyl-alpha-D-glucosamine + holo-[ACP]. Its pathway is glycolipid biosynthesis; lipid IV(A) biosynthesis; lipid IV(A) from (3R)-3-hydroxytetradecanoyl-[acyl-carrier-protein] and UDP-N-acetyl-alpha-D-glucosamine: step 1/6. Involved in the biosynthesis of lipid A, a phosphorylated glycolipid that anchors the lipopolysaccharide to the outer membrane of the cell. This chain is Acyl-[acyl-carrier-protein]--UDP-N-acetylglucosamine O-acyltransferase, found in Burkholderia multivorans (strain ATCC 17616 / 249).